The primary structure comprises 164 residues: F-box protein At4g05010 (164 aa).

The disordered stretch occupies residues 38-57 (SKRAPENDSPPVKRPSHETT). The 49-residue stretch at 61 to 109 (RSLLETLHQDILIRVLCHVDHEDLATLKRVSKTIRKAVIEAKKSHFDYS) folds into the F-box domain.

The polypeptide is F-box protein At4g05010 (Arabidopsis thaliana (Mouse-ear cress)).